We begin with the raw amino-acid sequence, 227 residues long: MVDVVMAPCSPVECRTAVVIDVLRATSTIVTALSNGASGVIPVKTIEEALKKRKEGVLICGERNAQKPKGFDLGNSPLEYRKEKISGKTIVLTTTNGTQVIERIRSEEIIAASFLNLSAVVEYLKSKEDILLVCAGTNGRFSLEDFLLAGAVVKRLKRNDLGDGARAAERYFESVENTREEIKKHSSHAKRLISLGFEKDVEFCTTEDLFKTVPTLVNGVFILKEFP.

Belongs to the ComB family. Mg(2+) serves as cofactor.

It carries out the reaction (2R)-O-phospho-3-sulfolactate + H2O = (2R)-3-sulfolactate + phosphate. The protein is Probable 2-phosphosulfolactate phosphatase of Thermotoga petrophila (strain ATCC BAA-488 / DSM 13995 / JCM 10881 / RKU-1).